Here is a 321-residue protein sequence, read N- to C-terminus: Phospho-N-acetylmuramoyl-pentapeptide-transferase (321 aa).

10 helical membrane-spanning segments follow: residues 1-21 (MIYV…PILI), 49-69 (TMGG…AIIF), 77-97 (ILLL…DYII), 112-132 (FLAQ…FNMI), 140-160 (IPFT…IVFW), 176-196 (GLAT…SFML), 200-220 (AVGT…IYNV), 225-245 (VFMG…VSIM), 250-270 (ISLI…ILQV), and 300-320 (VVSV…WIGV).

The protein belongs to the glycosyltransferase 4 family. MraY subfamily. Mg(2+) is required as a cofactor.

The protein resides in the cell membrane. The enzyme catalyses UDP-N-acetyl-alpha-D-muramoyl-L-alanyl-gamma-D-glutamyl-L-lysyl-D-alanyl-D-alanine + di-trans,octa-cis-undecaprenyl phosphate = Mur2Ac(oyl-L-Ala-gamma-D-Glu-L-Lys-D-Ala-D-Ala)-di-trans,octa-cis-undecaprenyl diphosphate + UMP. It participates in cell wall biogenesis; peptidoglycan biosynthesis. In terms of biological role, catalyzes the initial step of the lipid cycle reactions in the biosynthesis of the cell wall peptidoglycan: transfers peptidoglycan precursor phospho-MurNAc-pentapeptide from UDP-MurNAc-pentapeptide onto the lipid carrier undecaprenyl phosphate, yielding undecaprenyl-pyrophosphoryl-MurNAc-pentapeptide, known as lipid I. The protein is Phospho-N-acetylmuramoyl-pentapeptide-transferase of Staphylococcus carnosus (strain TM300).